Here is a 1009-residue protein sequence, read N- to C-terminus: Protein-tyrosine kinase 2-beta (1009 aa).

Residues 39–359 (RILKVCFYSN…GYCRLQGEHK (321 aa)) form the FERM domain. S361, S375, and S399 each carry phosphoserine. At Y402 the chain carries Phosphotyrosine; by autocatalysis. Positions 425–683 (VVLNRILGEG…ELVCSLSDIY (259 aa)) constitute a Protein kinase domain. ATP is bound by residues 431–439 (LGEGFFGEV), K457, and 503–509 (ELYPYGE). Catalysis depends on D549, which acts as the Proton acceptor. Y579, Y580, and Y722 each carry phosphotyrosine. Positions 702–725 (PKILEPTAFQEPPPKPSRPKYKHP) are disordered. The residue at position 762 (S762) is a Phosphoserine. T765 bears the Phosphothreonine mark. The interaction with TGFB1I1 stretch occupies residues 801–1009 (KIKMRQVLDR…VANLAHPPAE (209 aa)). At Y834 the chain carries Phosphotyrosine. At S839 the chain carries Phosphoserine. T842 is subject to Phosphothreonine. Position 849 is a phosphotyrosine (Y849). Residue S866 is modified to Phosphoserine. The focal adhesion targeting (FAT) stretch occupies residues 868–1009 (QPTANLDRTD…VANLAHPPAE (142 aa)). The residue at position 881 (Y881) is a Phosphotyrosine.

Belongs to the protein kinase superfamily. Tyr protein kinase family. FAK subfamily. Homodimer, or homooligomer. Interacts with NPHP1, ASAP1, ASAP2, ARHGAP26, SKAP2 and TGFB1I1. The Tyr-402 phosphorylated form interacts with SRC (via SH2 domain) and SRC family members. Forms a signaling complex with EPHA1, LCK and phosphatidylinositol 3-kinase; upon activation by EFNA1. Interacts with GRB2 (via SH2 domain). Interacts with P53/TP53 and MDM2. Interacts with MYLK. Interacts with BCAR1. Interacts with RB1CC1. Interacts with RHOU. Interacts with VAV1. Interacts with PDPK1. Interacts with LPXN and PTPN12. Interacts with SIRPA and SH2D3C. Interacts (hypophosphorylated) with PXN. Interacts with ARHGAP10. Interacts with KCNA2. Post-translationally, phosphorylated on tyrosine residues in response to various stimuli that elevate the intracellular calcium concentration; this activation is indirect and may be mediated by production of reactive oxygen species (ROS). Tyr-402 is the major autophosphorylation site, but other kinases can also phosphorylate Tyr-402. Autophosphorylation occurs in trans, i.e. one subunit of the dimeric receptor phosphorylates tyrosine residues on the other subunit. Phosphorylation at Tyr-402 promotes interaction with SRC and SRC family members, leading to phosphorylation at Tyr-579; Tyr-580 and Tyr-881. Phosphorylation at Tyr-881 is important for interaction with GRB2. Phosphorylated on tyrosine residues upon activation of FGR and PKC. Recruitment by NPHP1 to cell matrix adhesions initiates Tyr-402 phosphorylation. In monocytes, adherence to substrata is required for tyrosine phosphorylation and kinase activation. Angiotensin II, thapsigargin and L-alpha-lysophosphatidic acid (LPA) also induce autophosphorylation and increase kinase activity. Phosphorylation by MYLK promotes ITGB2 activation and is thus essential to trigger neutrophil transmigration during lung injury. Dephosphorylated by PTPN12. In terms of tissue distribution, highly expressed in pulmonary vein endothelial cells, lung and brain (at protein level). Isoform 1 is expressed at high levels in the brain (hippocampus, cerebral cortex and olfactory bulb) and poorly in the spleen and other tissues, whereas isoforms 2 and 3 are expressed in the spleen and brain (highest in cerebellum).

Its subcellular location is the cytoplasm. The protein resides in the perinuclear region. The protein localises to the cell membrane. It is found in the cell projection. It localises to the lamellipodium. Its subcellular location is the cell cortex. The protein resides in the nucleus. The protein localises to the cell junction. It is found in the focal adhesion. The catalysed reaction is L-tyrosyl-[protein] + ATP = O-phospho-L-tyrosyl-[protein] + ADP + H(+). Its activity is regulated as follows. Activated in response to stimuli that lead to increased intracellular Ca(2+) levels; this activation is indirect and may be mediated by calcium-mediated production of reactive oxygen species (ROS). Activated by autophosphorylation at Tyr-402; this creates a binding site for SRC family kinases and leads to phosphorylation at additional tyrosine residues. Phosphorylation at Tyr-402, Tyr-579 and Tyr-580 is required for optimal kinase activity. In terms of biological role, non-receptor protein-tyrosine kinase that regulates reorganization of the actin cytoskeleton, cell polarization, cell migration, adhesion, spreading and bone remodeling. Plays a role in the regulation of the humoral immune response, and is required for normal levels of marginal B-cells in the spleen and normal migration of splenic B-cells. Required for normal macrophage polarization and migration towards sites of inflammation. Regulates cytoskeleton rearrangement and cell spreading in T-cells, and contributes to the regulation of T-cell responses. Promotes osteoclastic bone resorption; this requires both PTK2B/PYK2 and SRC. May inhibit differentiation and activity of osteoprogenitor cells. Functions in signaling downstream of integrin and collagen receptors, immune receptors, G-protein coupled receptors (GPCR), cytokine, chemokine and growth factor receptors, and mediates responses to cellular stress. Forms multisubunit signaling complexes with SRC and SRC family members upon activation; this leads to the phosphorylation of additional tyrosine residues, creating binding sites for scaffold proteins, effectors and substrates. Regulates numerous signaling pathways. Promotes activation of phosphatidylinositol 3-kinase and of the AKT1 signaling cascade. Promotes activation of NOS3. Regulates production of the cellular messenger cGMP. Promotes activation of the MAP kinase signaling cascade, including activation of MAPK1/ERK2, MAPK3/ERK1 and MAPK8/JNK1. Promotes activation of Rho family GTPases, such as RHOA and RAC1. Recruits the ubiquitin ligase MDM2 to P53/TP53 in the nucleus, and thereby regulates P53/TP53 activity, P53/TP53 ubiquitination and proteasomal degradation. Acts as a scaffold, binding to both PDPK1 and SRC, thereby allowing SRC to phosphorylate PDPK1 at 'Tyr-9, 'Tyr-373', and 'Tyr-376'. Promotes phosphorylation of NMDA receptors by SRC family members, and thereby contributes to the regulation of NMDA receptor ion channel activity and intracellular Ca(2+) levels. May also regulate potassium ion transport by phosphorylation of potassium channel subunits. Phosphorylates SRC; this increases SRC kinase activity. Phosphorylates ASAP1, NPHP1, KCNA2 and SHC1. Promotes phosphorylation of ASAP2, RHOU and PXN; this requires both SRC and PTK2/PYK2. This chain is Protein-tyrosine kinase 2-beta (Ptk2b), found in Rattus norvegicus (Rat).